We begin with the raw amino-acid sequence, 1409 residues long: Adhesion and penetration protein autotransporter (1409 aa).

The first 25 residues, 1 to 25 (MKKTVFRLNFLTACVSLGIASQAWA), serve as a signal peptide directing secretion. A Peptidase S6 domain is found at 26–294 (GHTYFGIDYQ…LIREEWFYNE (269 aa)). Residue Ser-250 is part of the active site. Disordered stretches follow at residues 866–888 (YSASSNNAPRHRRSLETETTPTS) and 1016–1078 (AKQV…SKRA). The segment covering 1057–1067 (VEQTTETQTSK) has biased composition (polar residues). The span at 1068-1077 (PKTKKGRSKR) shows a compositional bias: basic residues. An Autotransporter domain is found at 1156-1409 (VDQAQSALWT…NVGVKLGYRW (254 aa)).

Its subcellular location is the periplasm. The protein localises to the secreted. It localises to the cell surface. The protein resides in the cell outer membrane. Functionally, probable protease; promotes adherence and invasion by directly binding to a host cell structure. The protein is Adhesion and penetration protein autotransporter (hap) of Haemophilus influenzae (strain ATCC 51907 / DSM 11121 / KW20 / Rd).